Consider the following 278-residue polypeptide: Checkpoint protein HUS1B (278 aa).

It belongs to the HUS1 family. Interacts with RAD1 and RAD9B. Expressed strongly in testis, less in spleen, thymus, prostate, colon and leukocytes.

This is Checkpoint protein HUS1B (HUS1B) from Homo sapiens (Human).